The chain runs to 248 residues: ATP synthase subunit a, chloroplastic (248 aa).

A run of 4 helical transmembrane segments spans residues 34–54 (LHGQ…IFAL), 95–115 (VPYI…GALI), 134–154 (INVT…AGIS), and 203–223 (VFAL…GLFA).

The protein belongs to the ATPase A chain family. In terms of assembly, F-type ATPases have 2 components, CF(1) - the catalytic core - and CF(0) - the membrane proton channel. CF(1) has five subunits: alpha(3), beta(3), gamma(1), delta(1), epsilon(1). CF(0) has four main subunits: a, b, b' and c.

The protein localises to the plastid. Its subcellular location is the chloroplast thylakoid membrane. Its function is as follows. Key component of the proton channel; it plays a direct role in the translocation of protons across the membrane. The protein is ATP synthase subunit a, chloroplastic of Guillardia theta (Cryptophyte).